A 114-amino-acid polypeptide reads, in one-letter code: NADH-ubiquinone oxidoreductase chain 3 (114 aa).

Helical transmembrane passes span 3–23, 54–74, and 85–105; these read ATIL…SFWL, FFLI…LLPF, and IVIL…IYEW.

This sequence belongs to the complex I subunit 3 family.

It localises to the mitochondrion membrane. It carries out the reaction a ubiquinone + NADH + 5 H(+)(in) = a ubiquinol + NAD(+) + 4 H(+)(out). Core subunit of the mitochondrial membrane respiratory chain NADH dehydrogenase (Complex I) that is believed to belong to the minimal assembly required for catalysis. Complex I functions in the transfer of electrons from NADH to the respiratory chain. The immediate electron acceptor for the enzyme is believed to be ubiquinone. The polypeptide is NADH-ubiquinone oxidoreductase chain 3 (mt-nd3) (Xenopus laevis (African clawed frog)).